Here is a 164-residue protein sequence, read N- to C-terminus: Pyruvoyl-dependent arginine decarboxylase (164 aa).

Pyruvic acid (Ser) is present on Ser52.

The protein belongs to the PdaD family. The cofactor is pyruvate.

It carries out the reaction L-arginine + H(+) = agmatine + CO2. The polypeptide is Pyruvoyl-dependent arginine decarboxylase (Methanococcus vannielii (strain ATCC 35089 / DSM 1224 / JCM 13029 / OCM 148 / SB)).